We begin with the raw amino-acid sequence, 267 residues long: Probable 6-oxopurine nucleoside phosphorylase (267 aa).

Phosphate is bound by residues Ser-10, 50–51, and 83–84; these read RH and SA. Residue Met-188 participates in substrate binding. Thr-189 provides a ligand contact to phosphate. 212–214 contributes to the substrate binding site; sequence NYA.

It belongs to the PNP/MTAP phosphorylase family. MTAP subfamily. As to quaternary structure, homohexamer. Dimer of a homotrimer.

The catalysed reaction is a purine D-ribonucleoside + phosphate = a purine nucleobase + alpha-D-ribose 1-phosphate. The enzyme catalyses guanosine + phosphate = alpha-D-ribose 1-phosphate + guanine. It carries out the reaction inosine + phosphate = alpha-D-ribose 1-phosphate + hypoxanthine. Its pathway is purine metabolism; purine nucleoside salvage. Its function is as follows. Purine nucleoside phosphorylase which is highly specific for 6-oxopurine nucleosides. Cleaves guanosine or inosine to respective bases and sugar-1-phosphate molecules. Involved in purine salvage. The polypeptide is Probable 6-oxopurine nucleoside phosphorylase (Thermococcus kodakarensis (strain ATCC BAA-918 / JCM 12380 / KOD1) (Pyrococcus kodakaraensis (strain KOD1))).